A 247-amino-acid chain; its full sequence is Aspartate/glutamate leucyltransferase (247 aa).

It belongs to the R-transferase family. Bpt subfamily.

The protein localises to the cytoplasm. The enzyme catalyses N-terminal L-glutamyl-[protein] + L-leucyl-tRNA(Leu) = N-terminal L-leucyl-L-glutamyl-[protein] + tRNA(Leu) + H(+). The catalysed reaction is N-terminal L-aspartyl-[protein] + L-leucyl-tRNA(Leu) = N-terminal L-leucyl-L-aspartyl-[protein] + tRNA(Leu) + H(+). Functionally, functions in the N-end rule pathway of protein degradation where it conjugates Leu from its aminoacyl-tRNA to the N-termini of proteins containing an N-terminal aspartate or glutamate. In Dechloromonas aromatica (strain RCB), this protein is Aspartate/glutamate leucyltransferase.